The sequence spans 1248 residues: Bifunctional autolysin (1248 aa).

The N-terminal stretch at 1 to 29 is a signal peptide; it reads MAKKFNYKLPSMVALTLVGSAVTAHQVQA. The segment at 103–134 is disordered; that stretch reads GDTRANQSATTNNTQPVAKSTSTTAPKTNTNV. The tract at residues 191–767 is N-acetylmuramoyl-L-alanine amidase; the sequence is ASAQPRSVAA…AVAQPKTAVK (577 aa). GW domains are found at residues 435-509, 511-585, 604-678, 680-754, 776-851, 853-928, and 935-1009; these read TVAA…YNTA, SPVN…DTAK, TVSS…YNNA, SPVN…VPAA, TTQT…VQNL, KEVK…APTA, and AAKD…KELI. Residues 768-1248 are endo-beta-N-acetylglucosaminidase; the sequence is AYTVTKPQTT…GKYFDIPQYK (481 aa).

The protein in the N-terminal section; belongs to the N-acetylmuramoyl-L-alanine amidase 2 family. This sequence in the C-terminal section; belongs to the glycosyl hydrolase 73 family. In terms of assembly, oligomer; forms a ring structure at the cell surface which is important for efficient partitioning of daughter cells after cell division. In terms of processing, undergoes proteolytic processing to generate the two extracellular lytic enzymes, probably at the septal region on the cell surface.

The protein resides in the secreted. The catalysed reaction is Hydrolyzes the link between N-acetylmuramoyl residues and L-amino acid residues in certain cell-wall glycopeptides.. It catalyses the reaction an N(4)-(oligosaccharide-(1-&gt;3)-[oligosaccharide-(1-&gt;6)]-beta-D-Man-(1-&gt;4)-beta-D-GlcNAc-(1-&gt;4)-alpha-D-GlcNAc)-L-asparaginyl-[protein] + H2O = an oligosaccharide-(1-&gt;3)-[oligosaccharide-(1-&gt;6)]-beta-D-Man-(1-&gt;4)-D-GlcNAc + N(4)-(N-acetyl-beta-D-glucosaminyl)-L-asparaginyl-[protein]. In terms of biological role, endohydrolysis of the di-N-acetylchitobiosyl unit in high-mannose glycopeptides and glycoproteins containing the -[(Man)5(GlcNAc)2]-Asn structure. One N-acetyl-D-glucosamine residue remains attached to the protein; the rest of the oligosaccharide is released intact. Cleaves the peptidoglycan connecting the daughter cells at the end of the cell division cycle, resulting in the separation of the two newly divided cells. Acts as an autolysin in penicillin-induced lysis. This chain is Bifunctional autolysin (atl), found in Staphylococcus aureus (strain Mu50 / ATCC 700699).